Consider the following 365-residue polypeptide: AP2/ERF and B3 domain-containing protein Os01g0141000 (365 aa).

Residues 1–24 form a disordered region; the sequence is MGVVSFSSTSSGASTATTESGGAV. A DNA-binding region (AP2/ERF) is located at residues 68–123; that stretch reads RYKGVVPQPNGRWGAQIYERHARVWLGTFPDEEAAARAYDVAALRYRGRDAATNFP. A DNA-binding region (TF-B3) is located at residues 182 to 294; the sequence is FEKAVTPSDV…KLLFIDCKKN (113 aa).

The protein resides in the nucleus. This is AP2/ERF and B3 domain-containing protein Os01g0141000 from Oryza sativa subsp. japonica (Rice).